Here is a 1035-residue protein sequence, read N- to C-terminus: Valine--tRNA ligase (1035 aa).

The 'HIGH' region motif lies at 45–55 (PNVTGALHLGH). The stretch at 253–281 (EKLSDANEKEAVDLNKQIEALQKRREERL) forms a coiled coil. K619 serves as a coordination point for ATP. Residues 967–1035 (DVEAELARLE…QDILKLQSKK (69 aa)) adopt a coiled-coil conformation.

The protein belongs to the class-I aminoacyl-tRNA synthetase family. ValS type 1 subfamily. As to quaternary structure, monomer.

Its subcellular location is the cytoplasm. It catalyses the reaction tRNA(Val) + L-valine + ATP = L-valyl-tRNA(Val) + AMP + diphosphate. Functionally, catalyzes the attachment of valine to tRNA(Val). As ValRS can inadvertently accommodate and process structurally similar amino acids such as threonine, to avoid such errors, it has a 'posttransfer' editing activity that hydrolyzes mischarged Thr-tRNA(Val) in a tRNA-dependent manner. This chain is Valine--tRNA ligase, found in Rhodopirellula baltica (strain DSM 10527 / NCIMB 13988 / SH1).